The chain runs to 549 residues: Glucose-6-phosphate isomerase (549 aa).

The active-site Proton donor is the Glu-353. Active-site residues include His-384 and Lys-512.

The protein belongs to the GPI family.

The protein resides in the cytoplasm. The catalysed reaction is alpha-D-glucose 6-phosphate = beta-D-fructose 6-phosphate. It participates in carbohydrate biosynthesis; gluconeogenesis. The protein operates within carbohydrate degradation; glycolysis; D-glyceraldehyde 3-phosphate and glycerone phosphate from D-glucose: step 2/4. Catalyzes the reversible isomerization of glucose-6-phosphate to fructose-6-phosphate. This chain is Glucose-6-phosphate isomerase, found in Alteromonas mediterranea (strain DSM 17117 / CIP 110805 / LMG 28347 / Deep ecotype).